Reading from the N-terminus, the 821-residue chain is MAAPVMDTCHVSCCANRAPNVVSWGRGGLIAFGTCNSVAIYNPEEIRVVDLLNKHTGRVNAVQWVHEPDCSPENQLISGGSDNNVIVWEKLDGKFRACAVCSGHSGPVCAVDAVSLSSSHLLVASASSDSTVKLWTYSSDAAECLQTVAFGSGFMMDVSLALLPGSRVPVLACGGDDSRVHLYVQLSGQFQRVLTLTGHEDWVRGVEWANKDGELWLASCSQDCLIRVWRLFAKTAAEPDLQTDGIIKMKENIFQVSGEEFAVTLETVLAGHENWVYGIHWQPPSVKGDSVEQSLKLLSASMDKTMILWGPEEDSGMWVEMVRVGEVGGNTLGFYGCQMSPDGSMILAHAFHGALHLWHHDSNQEWRPSVVISGHFNAVQDMSWDPEGEFIITVGSDQTTRLFTPWTRKGSSQITWHEISRPQIHGYDMQCLTMVGRFQFVSGADEKVLRVFKAPRNFVENFAHISGTSLEKLLGCNDIADLPEGASTPALGLSNKAVFQGDLASPSPQQDGGDFNSLSDQYKESYFQPLKLAEPPTEDDLLQNTLWPEVQKLYGHGFEMFCLASDCARTVVASACKASKAEHASILLWSTASWKQLQSLSCHSLTITQMAFSPNGQLLLAVSRDRTWSLWRRGNPDLDTEAMFSLYANTSKDTSVHTRIIWSCDWSADNKYFVTSSRDKKVIIWGHAVSGVAVGEGEDARVTSCSSVLDVGDSATAVSICPFLCSDHSYLLAVGLENGQILLYKWKPLEDLSSESDWSRCKDTDACQGHTMVVKRLRWRPRLGRGGHGGQDSKEEQAWVQLASAGADHVVKIFDINLSAL.

13 WD repeats span residues 14-53 (CANR…DLLN), 54-98 (KHTG…FRAC), 103-145 (GHSG…AECL), 151-193 (GSGF…FQRV), 198-239 (GHED…AAEP), 271-319 (GHEN…GMWV), 329-368 (GNTL…EWRP), 374-413 (GHFN…GSSQ), 424-462 (IHGY…VENF), 602-641 (CHSL…LDTE), 656-695 (VHTR…VAVG), 715-754 (ATAV…DLSS), and 769-821 (GHTM…LSAL).

The protein belongs to the WD repeat ELP2 family. In terms of assembly, component of the elongator complex.

The protein localises to the cytoplasm. It is found in the nucleus. It functions in the pathway tRNA modification; 5-methoxycarbonylmethyl-2-thiouridine-tRNA biosynthesis. In terms of biological role, component of the elongator complex which is required for multiple tRNA modifications, including mcm5U (5-methoxycarbonylmethyl uridine), mcm5s2U (5-methoxycarbonylmethyl-2-thiouridine), and ncm5U (5-carbamoylmethyl uridine). The elongator complex catalyzes the formation of carboxymethyluridine in the wobble base at position 34 in tRNAs. The chain is Elongator complex protein 2 (elp2) from Danio rerio (Zebrafish).